The primary structure comprises 54 residues: Ovomucoid (54 aa).

The 51-residue stretch at 4-54 folds into the Kazal-like domain; it reads VDCSDYPKPVCSLDYMPLCGSDNTTYNNKCIFCNAVVDSNGTITLSHFGKC. Intrachain disulfides connect Cys6/Cys36, Cys14/Cys33, and Cys22/Cys54. The N-linked (GlcNAc...) asparagine glycan is linked to Asn43.

The protein resides in the secreted. This is Ovomucoid from Haemorhous mexicanus (House finch).